A 208-amino-acid chain; its full sequence is Thioesterase 1/protease 1/lysophospholipase L1 (208 aa).

Residues 1–26 (MMNFNNVFRWHLPFLFLVLLTFRAAA) form the signal peptide. Residue Ser36 is the Nucleophile of the active site. Gly70 and Asn99 together coordinate substrate. Residues Asp180 and His183 contribute to the active site.

The protein belongs to the 'GDSL' lipolytic enzyme family. As to quaternary structure, monomer or homotetramer.

The protein localises to the periplasm. The catalysed reaction is a fatty acyl-CoA + H2O = a fatty acid + CoA + H(+). It carries out the reaction hexadecanoyl-CoA + H2O = hexadecanoate + CoA + H(+). The enzyme catalyses (9Z)-hexadecenoyl-CoA + H2O = (9Z)-hexadecenoate + CoA + H(+). It catalyses the reaction octadecanoyl-CoA + H2O = octadecanoate + CoA + H(+). The catalysed reaction is (9Z)-octadecenoyl-CoA + H2O = (9Z)-octadecenoate + CoA + H(+). It carries out the reaction (9Z)-octadecenoyl-[ACP] + H2O = (9Z)-octadecenoate + holo-[ACP] + H(+). The enzyme catalyses (11Z)-octadecenoyl-CoA + H2O = (11Z)-octadecenoate + CoA + H(+). It catalyses the reaction tetradecanoyl-CoA + H2O = tetradecanoate + CoA + H(+). The catalysed reaction is (5Z,8Z,11Z,14Z)-eicosatetraenoyl-CoA + H2O = (5Z,8Z,11Z,14Z)-eicosatetraenoate + CoA + H(+). It carries out the reaction dodecanoyl-CoA + H2O = dodecanoate + CoA + H(+). The enzyme catalyses decanoyl-CoA + H2O = decanoate + CoA + H(+). It catalyses the reaction hexanoyl-CoA + H2O = hexanoate + CoA + H(+). The catalysed reaction is a 1-acyl-sn-glycero-3-phosphocholine + H2O = sn-glycerol 3-phosphocholine + a fatty acid + H(+). It carries out the reaction a phenyl acetate + H2O = a phenol + acetate + H(+). The enzyme catalyses a butanoate ester + H2O = an aliphatic alcohol + butanoate + H(+). It catalyses the reaction a hexanoate ester + H2O = an aliphatic alcohol + hexanoate + H(+). The catalysed reaction is an octanoate ester + H2O = an aliphatic alcohol + octanoate + H(+). In terms of biological role, tesA is a multifunctional esterase that can act as a thioesterase, arylesterase, lysophospholipase and protease. This Escherichia coli O6:H1 (strain CFT073 / ATCC 700928 / UPEC) protein is Thioesterase 1/protease 1/lysophospholipase L1 (tesA).